We begin with the raw amino-acid sequence, 202 residues long: LexA repressor (202 aa).

A DNA-binding region (H-T-H motif) is located at residues 28-48; it reads RAEIAQRLGFRSPNAAEEHLK. Active-site for autocatalytic cleavage activity residues include S119 and K156.

The protein belongs to the peptidase S24 family. Homodimer.

The enzyme catalyses Hydrolysis of Ala-|-Gly bond in repressor LexA.. Functionally, represses a number of genes involved in the response to DNA damage (SOS response), including recA and lexA. Binds to the 16 bp palindromic sequence 5'-CTGTATATATATACAG-3'. In the presence of single-stranded DNA, RecA interacts with LexA causing an autocatalytic cleavage which disrupts the DNA-binding part of LexA, leading to derepression of the SOS regulon and eventually DNA repair. In Edwardsiella ictaluri (strain 93-146), this protein is LexA repressor.